A 189-amino-acid chain; its full sequence is WASH complex subunit homolog 3 (189 aa).

Positions 35–74 (MTEMLNNFGNKMEDILEKAEQSLDTADRKLRLMESKLAGM) form a coiled coil. 2 disordered regions span residues 76-101 (LEDK…NPSS) and 150-189 (SEGV…SDSD). Over residues 150 to 165 (SEGVDPSILKRGDEPS) the composition is skewed to basic and acidic residues. Residues 167-189 (PQAQTSRNYESSGESTASFSDSD) are compositionally biased toward polar residues. At Thr-182 the chain carries Phosphothreonine.

Belongs to the CCDC53 family. As to quaternary structure, probable component of the WASH complex. Component of the DHIC (ddl-1-containing hsf-1 inhibitory complex), which contains at least ddl-1, ddl-2, hsb-1 and hsf-1. Within the complex, interacts with ddl-2. Within the complex, interacts with hsb-1. Within the complex, interacts with hsf-1. Formation of the DHIC may be dependent upon the Insulin/IGF-1-like signaling (IIS) mediated pathway. Phosphorylated. Phosphorylation on Thr-182 may promote DHIC complex dissociation and consequently the activation of heat-shock transcription factor hsf-1. Phosphorylation is modulated by the Insulin/IGF-1-like signaling (IIS) mediated pathway. In terms of tissue distribution, expressed in pharynx, intestine, body wall muscles, vulva muscles, spermatheca, and several head and tail neurons.

In terms of biological role, acts as a component of the WASH core complex that functions as a nucleation-promoting factor (NPF) at the surface of endosomes, where it recruits and activates the Arp2/3 complex to induce actin polymerization, playing a key role in the fission of tubules that serve as transport intermediates during endosome sorting. Acts as a component of the DHIC (ddl-1-containing hsf-1 inhibitory complex) which modulates lifespan by sequestering the heat-shock transcription factor hsf-1 to negatively regulate its binding to DNA and its transcriptional activity. The polypeptide is WASH complex subunit homolog 3 (ddl-1) (Caenorhabditis elegans).